Consider the following 95-residue polypeptide: Aspartyl/glutamyl-tRNA(Asn/Gln) amidotransferase subunit C (95 aa).

The span at 55 to 67 (ALERRNVTREDQV) shows a compositional bias: basic and acidic residues. The disordered stretch occupies residues 55–83 (ALERRNVTREDQVHNSLTNDKALENAPET).

It belongs to the GatC family. As to quaternary structure, heterotrimer of A, B and C subunits.

It catalyses the reaction L-glutamyl-tRNA(Gln) + L-glutamine + ATP + H2O = L-glutaminyl-tRNA(Gln) + L-glutamate + ADP + phosphate + H(+). The catalysed reaction is L-aspartyl-tRNA(Asn) + L-glutamine + ATP + H2O = L-asparaginyl-tRNA(Asn) + L-glutamate + ADP + phosphate + 2 H(+). In terms of biological role, allows the formation of correctly charged Asn-tRNA(Asn) or Gln-tRNA(Gln) through the transamidation of misacylated Asp-tRNA(Asn) or Glu-tRNA(Gln) in organisms which lack either or both of asparaginyl-tRNA or glutaminyl-tRNA synthetases. The reaction takes place in the presence of glutamine and ATP through an activated phospho-Asp-tRNA(Asn) or phospho-Glu-tRNA(Gln). The protein is Aspartyl/glutamyl-tRNA(Asn/Gln) amidotransferase subunit C of Natranaerobius thermophilus (strain ATCC BAA-1301 / DSM 18059 / JW/NM-WN-LF).